We begin with the raw amino-acid sequence, 223 residues long: Translation initiation factor 6 (223 aa).

Belongs to the eIF-6 family. In terms of assembly, associates with the 50S ribosomal subunit, specifically with protein L14. Binds to 23S rRNA, possibly between where the 30S and 50S subunits associate to initiate translation. In terms of processing, modified in an unknown fashion (not phosphorylation) following release from 50S ribosomal subunits.

Functionally, binds to the 50S ribosomal subunit and prevents its association with the 30S ribosomal subunit to form the 70S initiation complex. Inhibits translation of both leadered and leaderless mRNAs, maybe by binding to the 50S ribosome subunit, preventing it from binding to the 30S subunit. The chain is Translation initiation factor 6 from Saccharolobus solfataricus (strain ATCC 35092 / DSM 1617 / JCM 11322 / P2) (Sulfolobus solfataricus).